The following is a 229-amino-acid chain: MAGGIKAWPEDERPREKLLRRGAPVLSDAELLALIIRTGDSVTGRSAIDLGRALLQECGDLRTLAGATVSELCAVKGMGTAKATSIKAALEMASRINSERLMICSERFTSPEQVYNHYHYAFRDRRKEYFMALLLDGKNRIMREIQVSEGSLNQSIVHPREVFNPAVRESAAAVILVHNHPTGDPAPSREDLEITRRLREAGDIMGIRVLDHIIIGDGRFTSFVSAGLL.

The MPN domain occupies 107-229; sequence RFTSPEQVYN…FTSFVSAGLL (123 aa). Zn(2+)-binding residues include H178, H180, and D191. The short motif at 178 to 191 is the JAMM motif element; sequence HNHPTGDPAPSRED.

Belongs to the UPF0758 family.

In Geobacter sulfurreducens (strain ATCC 51573 / DSM 12127 / PCA), this protein is UPF0758 protein GSU0386.